Here is a 431-residue protein sequence, read N- to C-terminus: MLKDAYTADVTPERDGEEVRLAGWVHEVRDLGGIKFVLLRDRTGIVQLTLPKQKVPKETFEKVPKLTKESVIRVEGTVQANEKAPGGVEVIPQRIEVLSESDTHLPLDPTGKVDADLDTRLDARVLDLRREEPQAIFKIRNVVTTAIREFLEERGFIEVHTPKIIASATEGGTELFPVVYFERDAYLAQSPQLYKQMLMAAGFERVYEIGPIFRAEEHNTRRHLNEAISVDIEMSFIESEEDVMRVLEELLAHVFRKVREECEKELEALDRELPELETPFERITYEETLDLLSEHGIEVEWGEDLPTEAERKLGEIFEEPFFITEWPRETRPFYTMAKDDEVTTAFDLMYQGLELASGAQREHRYDVLVRQIEEQGLSPEDFRHYLEAFKYGMPPHGGWGLGLERTLMTITGAENIREVTLFPRDRKRLHP.

Position 170 (Glu-170) interacts with L-aspartate. Residues 192-195 form an aspartate region; it reads QLYK. Arg-214 lines the L-aspartate pocket. Residues 214–216, 222–224, and Glu-354 each bind ATP; these read RAE and RHL. Mg(2+) contacts are provided by Glu-354 and Ser-357. L-aspartate-binding residues include Ser-357 and Arg-361. 402-405 contacts ATP; that stretch reads GLER.

The protein belongs to the class-II aminoacyl-tRNA synthetase family. Type 2 subfamily. In terms of assembly, homodimer. It depends on Mg(2+) as a cofactor.

It localises to the cytoplasm. The enzyme catalyses tRNA(Asx) + L-aspartate + ATP = L-aspartyl-tRNA(Asx) + AMP + diphosphate. Aspartyl-tRNA synthetase with relaxed tRNA specificity since it is able to aspartylate not only its cognate tRNA(Asp) but also tRNA(Asn). Reaction proceeds in two steps: L-aspartate is first activated by ATP to form Asp-AMP and then transferred to the acceptor end of tRNA(Asp/Asn). The chain is Aspartate--tRNA(Asp/Asn) ligase from Methanopyrus kandleri (strain AV19 / DSM 6324 / JCM 9639 / NBRC 100938).